Consider the following 364-residue polypeptide: tRNA 2-selenouridine synthase (364 aa).

One can recognise a Rhodanese domain in the interval 14–137 (LLADTPLIDV…LRQTAIQATW (124 aa)). The S-selanylcysteine intermediate role is filled by cysteine 97.

This sequence belongs to the SelU family. Monomer.

The catalysed reaction is 5-methylaminomethyl-2-thiouridine(34) in tRNA + selenophosphate + (2E)-geranyl diphosphate + H2O + H(+) = 5-methylaminomethyl-2-selenouridine(34) in tRNA + (2E)-thiogeraniol + phosphate + diphosphate. The enzyme catalyses 5-methylaminomethyl-2-thiouridine(34) in tRNA + (2E)-geranyl diphosphate = 5-methylaminomethyl-S-(2E)-geranyl-thiouridine(34) in tRNA + diphosphate. It carries out the reaction 5-methylaminomethyl-S-(2E)-geranyl-thiouridine(34) in tRNA + selenophosphate + H(+) = 5-methylaminomethyl-2-(Se-phospho)selenouridine(34) in tRNA + (2E)-thiogeraniol. It catalyses the reaction 5-methylaminomethyl-2-(Se-phospho)selenouridine(34) in tRNA + H2O = 5-methylaminomethyl-2-selenouridine(34) in tRNA + phosphate. Its function is as follows. Involved in the post-transcriptional modification of the uridine at the wobble position (U34) of tRNA(Lys), tRNA(Glu) and tRNA(Gln). Catalyzes the conversion of 2-thiouridine (S2U-RNA) to 2-selenouridine (Se2U-RNA). Acts in a two-step process involving geranylation of 2-thiouridine (S2U) to S-geranyl-2-thiouridine (geS2U) and subsequent selenation of the latter derivative to 2-selenouridine (Se2U) in the tRNA chain. This chain is tRNA 2-selenouridine synthase, found in Salmonella choleraesuis (strain SC-B67).